The primary structure comprises 49 residues: Large ribosomal subunit protein bL33 (49 aa).

The protein belongs to the bacterial ribosomal protein bL33 family.

The chain is Large ribosomal subunit protein bL33 from Streptococcus pyogenes serotype M18 (strain MGAS8232).